The chain runs to 358 residues: Peroxidase 12 (358 aa).

The signal sequence occupies residues Met-1–Ala-31. 4 cysteine pairs are disulfide-bonded: Cys-53/Cys-134, Cys-86/Cys-91, Cys-140/Cys-335, and Cys-220/Cys-247. His-84 serves as the catalytic Proton acceptor. Ca(2+)-binding residues include Asp-85, Val-88, Gly-90, Glu-92, and Ser-94. A substrate-binding site is contributed by Pro-183. Residues Asn-188 and Asn-202 are each glycosylated (N-linked (GlcNAc...) asparagine). His-213 contacts heme b. Residue Thr-214 participates in Ca(2+) binding. Asn-251 is a glycosylation site (N-linked (GlcNAc...) asparagine). Residues Asp-259, Ser-262, and Asp-267 each coordinate Ca(2+). The N-linked (GlcNAc...) asparagine glycan is linked to Asn-334.

Belongs to the peroxidase family. Classical plant (class III) peroxidase subfamily. Heme b is required as a cofactor. It depends on Ca(2+) as a cofactor. As to expression, expressed in roots and leaves.

Its subcellular location is the secreted. It localises to the vacuole. It catalyses the reaction 2 a phenolic donor + H2O2 = 2 a phenolic radical donor + 2 H2O. Functionally, removal of H(2)O(2), oxidation of toxic reductants, biosynthesis and degradation of lignin, suberization, auxin catabolism, response to environmental stresses such as wounding, pathogen attack and oxidative stress. These functions might be dependent on each isozyme/isoform in each plant tissue. In terms of biological role, exhibits a Ca(2+)-pectate binding affinity which could be interpreted in vivo as a specificity to interact with the pectic structure of the cell wall. This is Peroxidase 12 (PER12) from Arabidopsis thaliana (Mouse-ear cress).